Reading from the N-terminus, the 445-residue chain is Beclin-1 (445 aa).

The BH3 signature appears at Thr-103–Ser-122. Positions Asp-137 to Val-264 form a coiled coil. An evolutionary conserved domain (ECD) region spans residues Asp-240–Lys-445. The interval Trp-420 to Lys-445 is required for membrane-association.

The protein belongs to the beclin family. As to quaternary structure, component of the PI3K (PI3KC3/PI3K-III/class III phosphatidylinositol 3-kinase) complex. Post-translationally, may be proteolytically processed by caspases; the C-terminal fragment(s) may induce apoptosis.

Its subcellular location is the cytoplasm. The protein localises to the golgi apparatus. It is found in the trans-Golgi network membrane. It localises to the endosome membrane. The protein resides in the endoplasmic reticulum membrane. Its subcellular location is the mitochondrion membrane. The protein localises to the cytoplasmic vesicle. It is found in the autophagosome. Its function is as follows. Plays a central role in autophagy. Acts as core subunit of different PI3K complex forms that mediate formation of phosphatidylinositol 3-phosphate and are believed to play a role in multiple membrane trafficking pathways: PI3KC3-C1 is involved in initiation of autophagosomes and PI3KC3-C2 in maturation of autophagosomes and endocytosis. Involved in regulation of degradative endocytic trafficking and required for the abscission step in cytokinesis, probably in the context of PI3KC3-C2. Essential for the formation of PI3KC3-C2 but not PI3KC3-C1 PI3K complex forms. Involved in endocytosis including endosome formation in neuronal cells. The sequence is that of Beclin-1 (becn1) from Xenopus tropicalis (Western clawed frog).